The primary structure comprises 467 residues: Palmitoyltransferase ZDHHC18-A (467 aa).

At 1-59 (MKNCEYQQIDPRALRTPSSRTSSTLPCGRKGSQRLRRKWEVFPGKNRFYCDGRIMLARQ) the chain is on the cytoplasmic side. Residues 60–80 (CGVLPLTIGLIFITSVLFFTF) traverse the membrane as a helical segment. The Lumenal segment spans residues 81–88 (DCPFLVDH). A helical membrane pass occupies residues 89–109 (LTVFIPVIGGVLFIFVVISLL). The Cytoplasmic segment spans residues 110-204 (QTSFTDPGIL…GNCVGKRNYR (95 aa)). Residues 161–211 (KYCFTCKMFRPPRTSHCSLCDNCVERFDHHCPWVGNCVGKRNYRFFYAFIV) enclose the DHHC domain. The S-palmitoyl cysteine intermediate role is filled by Cys-191. Residues 205–225 (FFYAFIVSLSFLTSFIFGCVI) traverse the membrane as a helical segment. The Lumenal segment spans residues 226 to 247 (THLTLRSQGGNGFIQAIQDSPA). A helical membrane pass occupies residues 248–268 (SVVELVICFFSIWSILGLSGF). Residues 269 to 467 (HTYLVASNLT…APDMGFIPLN (199 aa)) are Cytoplasmic-facing.

It belongs to the DHHC palmitoyltransferase family. ERF2/ZDHHC9 subfamily.

The protein resides in the golgi apparatus membrane. It carries out the reaction L-cysteinyl-[protein] + hexadecanoyl-CoA = S-hexadecanoyl-L-cysteinyl-[protein] + CoA. Its function is as follows. Palmitoyltransferase that catalyzes the addition of palmitate onto various protein substrates, such as CGAS, HRAS and LCK. This chain is Palmitoyltransferase ZDHHC18-A, found in Danio rerio (Zebrafish).